The following is a 357-amino-acid chain: Peptide chain release factor 1 (357 aa).

The residue at position 234 (glutamine 234) is an N5-methylglutamine.

Belongs to the prokaryotic/mitochondrial release factor family. Post-translationally, methylated by PrmC. Methylation increases the termination efficiency of RF1.

It is found in the cytoplasm. Its function is as follows. Peptide chain release factor 1 directs the termination of translation in response to the peptide chain termination codons UAG and UAA. This Lactococcus lactis subsp. lactis (strain IL1403) (Streptococcus lactis) protein is Peptide chain release factor 1 (prfA).